Here is a 251-residue protein sequence, read N- to C-terminus: Imidazole glycerol phosphate synthase subunit HisF (251 aa).

Residues D11 and D130 contribute to the active site.

The protein belongs to the HisA/HisF family. As to quaternary structure, heterodimer of HisH and HisF.

The protein resides in the cytoplasm. It carries out the reaction 5-[(5-phospho-1-deoxy-D-ribulos-1-ylimino)methylamino]-1-(5-phospho-beta-D-ribosyl)imidazole-4-carboxamide + L-glutamine = D-erythro-1-(imidazol-4-yl)glycerol 3-phosphate + 5-amino-1-(5-phospho-beta-D-ribosyl)imidazole-4-carboxamide + L-glutamate + H(+). It participates in amino-acid biosynthesis; L-histidine biosynthesis; L-histidine from 5-phospho-alpha-D-ribose 1-diphosphate: step 5/9. In terms of biological role, IGPS catalyzes the conversion of PRFAR and glutamine to IGP, AICAR and glutamate. The HisF subunit catalyzes the cyclization activity that produces IGP and AICAR from PRFAR using the ammonia provided by the HisH subunit. The sequence is that of Imidazole glycerol phosphate synthase subunit HisF from Chlorobaculum tepidum (strain ATCC 49652 / DSM 12025 / NBRC 103806 / TLS) (Chlorobium tepidum).